We begin with the raw amino-acid sequence, 98 residues long: Co-chaperonin GroES (98 aa).

This sequence belongs to the GroES chaperonin family. As to quaternary structure, heptamer of 7 subunits arranged in a ring. Interacts with the chaperonin GroEL.

The protein localises to the cytoplasm. Together with the chaperonin GroEL, plays an essential role in assisting protein folding. The GroEL-GroES system forms a nano-cage that allows encapsulation of the non-native substrate proteins and provides a physical environment optimized to promote and accelerate protein folding. GroES binds to the apical surface of the GroEL ring, thereby capping the opening of the GroEL channel. The chain is Co-chaperonin GroES from Beutenbergia cavernae (strain ATCC BAA-8 / DSM 12333 / CCUG 43141 / JCM 11478 / NBRC 16432 / NCIMB 13614 / HKI 0122).